A 72-amino-acid chain; its full sequence is Translation initiation factor IF-1 (72 aa).

The S1-like domain maps to 1–72 (MSKEELLEFP…TKGRITYRFK (72 aa)).

Belongs to the IF-1 family. In terms of assembly, component of the 30S ribosomal translation pre-initiation complex which assembles on the 30S ribosome in the order IF-2 and IF-3, IF-1 and N-formylmethionyl-tRNA(fMet); mRNA recruitment can occur at any time during PIC assembly.

The protein localises to the cytoplasm. Functionally, one of the essential components for the initiation of protein synthesis. Stabilizes the binding of IF-2 and IF-3 on the 30S subunit to which N-formylmethionyl-tRNA(fMet) subsequently binds. Helps modulate mRNA selection, yielding the 30S pre-initiation complex (PIC). Upon addition of the 50S ribosomal subunit IF-1, IF-2 and IF-3 are released leaving the mature 70S translation initiation complex. The chain is Translation initiation factor IF-1 from Parvibaculum lavamentivorans (strain DS-1 / DSM 13023 / NCIMB 13966).